The primary structure comprises 605 residues: 9-cis-epoxycarotenoid dioxygenase NCED1, chloroplastic (605 aa).

The transit peptide at 1–16 (MATTTSHATNTWIKTK) directs the protein to the chloroplast. The disordered stretch occupies residues 55-89 (ILHFPKQSSNYQTPKNNTISHPKQENNNSSSSSTS). Residues 60-75 (KQSSNYQTPKNNTISH) are compositionally biased toward polar residues. Residues 80–89 (NNNSSSSSTS) show a composition bias toward low complexity. Fe cation is bound by residues H302, H351, H416, and H592.

The protein belongs to the carotenoid oxygenase family. Requires Fe(2+) as cofactor. Expressed in developing and ripening fruits. Highly expressed in pulp. Observed in unpollinated ovaries (e.g. ovules, placenta and pericarp). Expressed in flowers.

It is found in the plastid. It localises to the chloroplast stroma. It carries out the reaction a 9-cis-epoxycarotenoid + O2 = a 12'-apo-carotenal + 2-cis,4-trans-xanthoxin. It catalyses the reaction 9-cis-violaxanthin + O2 = (3S,5R,6S)-5,6-epoxy-3-hydroxy-5,6-dihydro-12'-apo-beta-caroten-12'-al + 2-cis,4-trans-xanthoxin. The enzyme catalyses 9'-cis-neoxanthin + O2 = (3S,5R,6R)-3,5-dihydroxy-6,7-didehydro-5,6-dihydro-12'-apo-beta-caroten-12'-al + 2-cis,4-trans-xanthoxin. Its pathway is plant hormone biosynthesis; abscisate biosynthesis. Has a 11,12(11',12') 9-cis epoxycarotenoid cleavage activity. Catalyzes the first step of abscisic-acid (ABA) biosynthesis from carotenoids. Required for ABA accumulation upon drought. Required for ABA-mediated regulation of anther/pollen development, including metabolism, cell wall modification and transcription level. Positive regulator of fruit ripening involved in the biosynthesis of abscisic acid (ABA); initiates ABA biosynthesis at the onset of fruit ripening. Modulates the degree of pigmentation and carotenoid composition as well as pectin catabolism during ripening and may regulate the ethylene production and action in climacteric tomato fruit. This is 9-cis-epoxycarotenoid dioxygenase NCED1, chloroplastic from Solanum lycopersicum (Tomato).